The sequence spans 149 residues: Transcriptional repressor NrdR (149 aa).

A zinc finger spans residues 3–34 (CPFCAAVDTKVIDSRLVSDGSQVRRRRQCLDC). Positions 49–139 (PRVIKSDEVR…VYRSFEDVRE (91 aa)) constitute an ATP-cone domain.

It belongs to the NrdR family. Requires Zn(2+) as cofactor.

Negatively regulates transcription of bacterial ribonucleotide reductase nrd genes and operons by binding to NrdR-boxes. The protein is Transcriptional repressor NrdR of Yersinia pseudotuberculosis serotype O:1b (strain IP 31758).